A 440-amino-acid polypeptide reads, in one-letter code: Chaperone SurA (440 aa).

An N-terminal signal peptide occupies residues 1–25 (MGTKLSSRSPFSLPFLTLLAGMAIA). 2 PpiC domains span residues 182–283 (SDEY…KLVE) and 294–392 (IDQT…QVIE).

It is found in the periplasm. It carries out the reaction [protein]-peptidylproline (omega=180) = [protein]-peptidylproline (omega=0). Its function is as follows. Chaperone involved in the correct folding and assembly of outer membrane proteins. Recognizes specific patterns of aromatic residues and the orientation of their side chains, which are found more frequently in integral outer membrane proteins. May act in both early periplasmic and late outer membrane-associated steps of protein maturation. This Nitrosospira multiformis (strain ATCC 25196 / NCIMB 11849 / C 71) protein is Chaperone SurA.